The primary structure comprises 549 residues: Alanine aminotransferase 2-like (549 aa).

K367 is modified (N6-(pyridoxal phosphate)lysine).

It belongs to the class-I pyridoxal-phosphate-dependent aminotransferase family. Alanine aminotransferase subfamily. In terms of assembly, homodimer. Pyridoxal 5'-phosphate is required as a cofactor.

It catalyses the reaction L-alanine + 2-oxoglutarate = pyruvate + L-glutamate. The protein operates within amino-acid degradation; L-alanine degradation via transaminase pathway; pyruvate from L-alanine: step 1/1. Catalyzes the reversible transamination between alanine and 2-oxoglutarate to form pyruvate and glutamate. This is Alanine aminotransferase 2-like (gpt2l) from Danio rerio (Zebrafish).